Consider the following 237-residue polypeptide: Class B acid phosphatase (237 aa).

Positions 1–25 (MRKITLALSAACLLFSLNNAVVARA) are cleaved as a signal peptide. The active-site Nucleophile is the Asp-69. 2 residues coordinate Mg(2+): Asp-69 and Asp-71. The Proton donor role is filled by Asp-71. Substrate-binding positions include 137–138 (TG) and Lys-177. Asp-192 is a Mg(2+) binding site.

It belongs to the class B bacterial acid phosphatase family. As to quaternary structure, homotetramer. Requires Mg(2+) as cofactor.

The protein localises to the periplasm. The catalysed reaction is a phosphate monoester + H2O = an alcohol + phosphate. In terms of biological role, dephosphorylates several organic phosphate monoesters. Also has a phosphotransferase activity catalyzing the transfer of low-energy phosphate groups from organic phosphate monoesters to free hydroxyl groups of various organic compounds. In Enterobacter sp. (strain 638), this protein is Class B acid phosphatase.